The sequence spans 513 residues: ATP synthase subunit alpha 2 (513 aa).

Position 169-176 (169-176 (GDRQTGKT)) interacts with ATP.

It belongs to the ATPase alpha/beta chains family. As to quaternary structure, F-type ATPases have 2 components, CF(1) - the catalytic core - and CF(0) - the membrane proton channel. CF(1) has five subunits: alpha(3), beta(3), gamma(1), delta(1), epsilon(1). CF(0) has three main subunits: a(1), b(2) and c(9-12). The alpha and beta chains form an alternating ring which encloses part of the gamma chain. CF(1) is attached to CF(0) by a central stalk formed by the gamma and epsilon chains, while a peripheral stalk is formed by the delta and b chains.

It is found in the cell inner membrane. The catalysed reaction is ATP + H2O + 4 H(+)(in) = ADP + phosphate + 5 H(+)(out). Its function is as follows. Produces ATP from ADP in the presence of a proton gradient across the membrane. The alpha chain is a regulatory subunit. In Shewanella frigidimarina (strain NCIMB 400), this protein is ATP synthase subunit alpha 2.